We begin with the raw amino-acid sequence, 292 residues long: MKSEAKDGEEESLQTAFKKLRVDASGSVASLSVGEGTGVRAPVRTATDDTKPKTTCASKDSWHGSTRKSSRGAVRTQRRRRSKSPVLHPPKFIHCSTIASSSSSQLKHKSQTDSPDGSSGLGISSPKEFSAGESSTSLDANHTGAVVEPLRTSVPRLPSESKKEDSSDATQVPQASLKASDLSDFQSVSKLNQGKPCTCIGKECQCKRWHDMEVYSFSGLQSVPPLAPERRSTLEDYSQSLHARTLSGSPRSCSEQARVFVDDVTIEDLSGYMEYYLYIPKKMSHMAEMMYT.

Residues 24–178 (ASGSVASLSV…ATQVPQASLK (155 aa)) are disordered. The segment covering 65-83 (STRKSSRGAVRTQRRRRSK) has biased composition (basic residues). Phosphothreonine is present on residues Thr143 and Thr233.

In Homo sapiens (Human), this protein is Oxidative stress-responsive serine-rich protein 1 (OSER1).